A 294-amino-acid chain; its full sequence is 4-hydroxy-tetrahydrodipicolinate synthase (294 aa).

A pyruvate-binding site is contributed by Thr48. Tyr136 functions as the Proton donor/acceptor in the catalytic mechanism. Lys164 functions as the Schiff-base intermediate with substrate in the catalytic mechanism. Ile206 contacts pyruvate.

Belongs to the DapA family. In terms of assembly, homotetramer; dimer of dimers.

Its subcellular location is the cytoplasm. It catalyses the reaction L-aspartate 4-semialdehyde + pyruvate = (2S,4S)-4-hydroxy-2,3,4,5-tetrahydrodipicolinate + H2O + H(+). It participates in amino-acid biosynthesis; L-lysine biosynthesis via DAP pathway; (S)-tetrahydrodipicolinate from L-aspartate: step 3/4. Functionally, catalyzes the condensation of (S)-aspartate-beta-semialdehyde [(S)-ASA] and pyruvate to 4-hydroxy-tetrahydrodipicolinate (HTPA). The polypeptide is 4-hydroxy-tetrahydrodipicolinate synthase (Phenylobacterium zucineum (strain HLK1)).